The following is a 425-amino-acid chain: Xyloglucan O-acetyltransferase 2 (425 aa).

Residues M1–K18 are Cytoplasmic-facing. A helical; Signal-anchor for type II membrane protein membrane pass occupies residues L19–Y38. Residues P39–Q425 are Lumenal-facing. 4 cysteine pairs are disulfide-bonded: C68–C118, C89–C154, C98–C398, and C313–C394. A glycan (N-linked (GlcNAc...) asparagine) is linked at N85. The short motif at G141–S143 is the GDS motif element. S143 acts as the Nucleophile in catalysis. N-linked (GlcNAc...) asparagine glycosylation is found at N183 and N259. The active-site Proton donor is the D393. The DXXH motif signature appears at D393–H396. The active-site Proton acceptor is H396.

The protein belongs to the PC-esterase family. TBL subfamily.

The protein resides in the golgi apparatus membrane. Xyloglucan acetyltransferase that catalyzes the acetylation of fucosylated Gal residues on xyloglucan side chains. Predominantly catalyze 6-O-monoacetylation of Gal residues in the Fuc-Gal-Xyl trisaccharide side chains of xyloglucan oligomers. In Populus trichocarpa (Western balsam poplar), this protein is Xyloglucan O-acetyltransferase 2.